Consider the following 521-residue polypeptide: Cytokinin dehydrogenase 9 (521 aa).

Residues 1-22 (MRPSLLQYLKLLLLLALGGVTT) form the signal peptide. The N-linked (GlcNAc...) asparagine glycan is linked to N57. Positions 59 to 237 (SSFPPVAVLH…TRARIPLEPA (179 aa)) constitute an FAD-binding PCMH-type domain. FAD contacts are provided by A95, G97, and G99. H100 carries the post-translational modification Pros-8alpha-FAD histidine. Residues S101, Q105, D161, T166, S172, V176, and I227 each coordinate FAD. N278, N412, and N418 each carry an N-linked (GlcNAc...) asparagine glycan. Y469 lines the FAD pocket. A glycan (N-linked (GlcNAc...) asparagine) is linked at N472. Q507 is an FAD binding site.

Belongs to the oxygen-dependent FAD-linked oxidoreductase family. In terms of assembly, monomer. It depends on FAD as a cofactor. As to expression, expressed in inflorescence meristems.

It localises to the secreted. The protein localises to the extracellular space. The protein resides in the cytoplasm. It is found in the cytosol. Its subcellular location is the nucleus. It carries out the reaction N(6)-dimethylallyladenine + A + H2O = 3-methyl-2-butenal + adenine + AH2. Functionally, catalyzes the oxidation of cytokinins, a family of N(6)-substituted adenine derivatives that are plant hormones, where the substituent is an isopentenyl group. Possesses cytokinin oxidase activity toward trans-zeatin (tZ) and N6-(2-isopentenyl)adenine (2iP) in vitro. Functions as a primary strigolactone-responsive gene to regulate rice tillering, plant height, and panicle size, likely via a secondary response gene, RR5, which encodes a cytokinin-inducible rice type-A response regulator that seems to act as negative regulator of the cytokinin signaling. In Oryza sativa subsp. japonica (Rice), this protein is Cytokinin dehydrogenase 9.